A 419-amino-acid chain; its full sequence is MNIIDELEWRGAIYQQTDEEGLRKWVEEKQISLYCGIDPSGDSMHIGHLIPFMILRRFQNAGHRPIILVGGATGTIGDPSGKKEERKLQSMEQISKNVESLRVQLGKIFDFEGNSAASMVNNYDWTKDVSILDFLRDYGKEFNVNTMLSKDIVASRLEVGISFTEFAYQILQAMDFNHLYEFNDCRLQIGGSDQWGNITAGLDLIRKKQGENAKAFGLTIPLLTKADGTKFGKSEGGAIWLNPEKTTPYEFYQFWINTDDRDVVKYLKYFTFLTEAEIDELAKQVETEPHLRAAQKTLAAEMTKFVHSEEALEQALKISKALFSGDVKALTADEIEQGFKDVPTFVAEDTEANLVDWLVTLGIEPSKRQAREDVGNGAIYINGERQQDLEKIMDASDRIENKFTIVRRGKKKYFLVSYK.

Tyrosine 34 contacts L-tyrosine. A 'HIGH' region motif is present at residues 39–48; it reads PSGDSMHIGH. L-tyrosine-binding residues include tyrosine 168 and glutamine 172. The 'KMSKS' region motif lies at 230 to 234; it reads KFGKS. Position 233 (lysine 233) interacts with ATP. Residues 352–418 form the S4 RNA-binding domain; it reads ANLVDWLVTL…GKKKYFLVSY (67 aa).

The protein belongs to the class-I aminoacyl-tRNA synthetase family. TyrS type 1 subfamily. Homodimer.

The protein resides in the cytoplasm. It catalyses the reaction tRNA(Tyr) + L-tyrosine + ATP = L-tyrosyl-tRNA(Tyr) + AMP + diphosphate + H(+). Catalyzes the attachment of tyrosine to tRNA(Tyr) in a two-step reaction: tyrosine is first activated by ATP to form Tyr-AMP and then transferred to the acceptor end of tRNA(Tyr). This chain is Tyrosine--tRNA ligase, found in Listeria monocytogenes serotype 4b (strain CLIP80459).